Consider the following 628-residue polypeptide: tRNA uridine 5-carboxymethylaminomethyl modification enzyme MnmG (628 aa).

FAD contacts are provided by residues 14-19, valine 126, and serine 181; that span reads GAGHAG. An NAD(+)-binding site is contributed by 273 to 287; sequence GPRYCPSIEDKVVRF. Position 370 (glutamine 370) interacts with FAD.

It belongs to the MnmG family. In terms of assembly, homodimer. Heterotetramer of two MnmE and two MnmG subunits. It depends on FAD as a cofactor.

It is found in the cytoplasm. In terms of biological role, NAD-binding protein involved in the addition of a carboxymethylaminomethyl (cmnm) group at the wobble position (U34) of certain tRNAs, forming tRNA-cmnm(5)s(2)U34. The polypeptide is tRNA uridine 5-carboxymethylaminomethyl modification enzyme MnmG (Exiguobacterium sibiricum (strain DSM 17290 / CCUG 55495 / CIP 109462 / JCM 13490 / 255-15)).